Here is a 136-residue protein sequence, read N- to C-terminus: Keratin-associated protein 15-1 (136 aa).

This sequence belongs to the PMG family. Interacts with hair keratins.

Functionally, in the hair cortex, hair keratin intermediate filaments are embedded in an interfilamentous matrix, consisting of hair keratin-associated proteins (KRTAP), which are essential for the formation of a rigid and resistant hair shaft through their extensive disulfide bond cross-linking with abundant cysteine residues of hair keratins. The matrix proteins include the high-sulfur and high-glycine-tyrosine keratins. This Capra hircus (Goat) protein is Keratin-associated protein 15-1 (KRTAP15-1).